Here is a 199-residue protein sequence, read N- to C-terminus: TATA-box-binding protein (199 aa).

Repeat copies occupy residues 10–86 and 101–177.

The protein belongs to the TBP family.

Functionally, general factor that plays a role in the activation of archaeal genes transcribed by RNA polymerase. Binds specifically to the TATA box promoter element which lies close to the position of transcription initiation. The chain is TATA-box-binding protein from Pyrobaculum calidifontis (strain DSM 21063 / JCM 11548 / VA1).